We begin with the raw amino-acid sequence, 341 residues long: Probable dual-specificity RNA methyltransferase RlmN (341 aa).

The Proton acceptor role is filled by Glu-88. The Radical SAM core domain maps to 94–314 (EGDRATLCIS…ESHGFTCTIR (221 aa)). Cysteines 101 and 325 form a disulfide. [4Fe-4S] cluster contacts are provided by Cys-108, Cys-112, and Cys-115. S-adenosyl-L-methionine is bound by residues 153-154 (GE), Ser-185, 206-208 (SLH), and His-282. The active-site S-methylcysteine intermediate is Cys-325.

It belongs to the radical SAM superfamily. RlmN family. [4Fe-4S] cluster serves as cofactor.

It localises to the cytoplasm. It carries out the reaction adenosine(2503) in 23S rRNA + 2 reduced [2Fe-2S]-[ferredoxin] + 2 S-adenosyl-L-methionine = 2-methyladenosine(2503) in 23S rRNA + 5'-deoxyadenosine + L-methionine + 2 oxidized [2Fe-2S]-[ferredoxin] + S-adenosyl-L-homocysteine. The catalysed reaction is adenosine(37) in tRNA + 2 reduced [2Fe-2S]-[ferredoxin] + 2 S-adenosyl-L-methionine = 2-methyladenosine(37) in tRNA + 5'-deoxyadenosine + L-methionine + 2 oxidized [2Fe-2S]-[ferredoxin] + S-adenosyl-L-homocysteine. In terms of biological role, specifically methylates position 2 of adenine 2503 in 23S rRNA and position 2 of adenine 37 in tRNAs. This is Probable dual-specificity RNA methyltransferase RlmN from Porphyromonas gingivalis (strain ATCC BAA-308 / W83).